A 319-amino-acid polypeptide reads, in one-letter code: MKIGIVGLGRVGSSTAFALLMKGFAREMVLIDVDKKRAEGDALDLIHGTPFTRRANIYAGDYADLKGSDVVIVAAGVPQKPGETRLQLLGRNARVMKEIARNVSKYAPDSIVIVVTNPVDVLTYFFLKESGMDPRKVFGSGTVLDTARLRTLIAQHCGFSPRSVHVYVIGEHGDSEVPVWSGAMIGGIPLQNMCQICQKCDSKILENFAEKTKRAAYEIIERKGATHYAIALAVADIVESIFFDEKRVLTLSVYLEDYLGVKDLCISVPVTLGKHGVERILKLNLNEEELEAFRKSASILKNAINEITAEENKHQNTGG.

NAD(+) is bound by residues Val11, Asp32, Arg37, Tyr62, and 76–77 (GV). Residues Gln79, Arg85, and 117–120 (NPVD) each bind substrate. NAD(+)-binding positions include 115-117 (VTN) and Ser140. 145–148 (DTAR) provides a ligand contact to substrate. Beta-D-fructose 1,6-bisphosphate is bound by residues Arg150 and His165. Residue His172 is the Proton acceptor of the active site. Tyr217 is modified (phosphotyrosine). Thr226 lines the substrate pocket.

Belongs to the LDH/MDH superfamily. LDH family. Homotetramer.

It is found in the cytoplasm. It carries out the reaction (S)-lactate + NAD(+) = pyruvate + NADH + H(+). It functions in the pathway fermentation; pyruvate fermentation to lactate; (S)-lactate from pyruvate: step 1/1. Its activity is regulated as follows. Allosterically activated by fructose 1,6-bisphosphate (FBP). Functionally, catalyzes the conversion of lactate to pyruvate. The polypeptide is L-lactate dehydrogenase (Thermotoga sp. (strain RQ2)).